The chain runs to 231 residues: Sugar fermentation stimulation protein homolog (231 aa).

It belongs to the SfsA family.

This Geotalea daltonii (strain DSM 22248 / JCM 15807 / FRC-32) (Geobacter daltonii) protein is Sugar fermentation stimulation protein homolog.